Reading from the N-terminus, the 260-residue chain is Lysine/arginine/ornithine-binding periplasmic protein (260 aa).

Positions 1-22 are cleaved as a signal peptide; it reads MKKSILALSLLVGLSTAASSYA. Residue Asp-33 participates in L-arginine binding. Residue Asp-33 participates in L-lysine binding. Asp-33 serves as a coordination point for L-ornithine. A disulfide bridge links Cys-60 with Cys-67. Residues Ser-91, Ser-92, Ser-94, Arg-99, Thr-143, and Asp-183 each coordinate L-arginine. L-ornithine-binding residues include Ser-91, Ser-92, Ser-94, Arg-99, Thr-143, and Asp-183. L-lysine contacts are provided by Ser-92, Ser-94, Arg-99, and Thr-143.

Belongs to the bacterial solute-binding protein 3 family. In terms of assembly, the complex is composed of two ATP-binding proteins (HisP), two transmembrane proteins (HisM and HisQ) and a solute-binding protein (ArgT).

It is found in the periplasm. Functionally, part of the ABC transporter complex HisPMQ-ArgT involved in lysine/arginine/ornithine transport. Binds lysine, arginine and ornithine. Stimulates ATPase activity of HisP. The polypeptide is Lysine/arginine/ornithine-binding periplasmic protein (argT) (Escherichia coli (strain K12)).